A 37-amino-acid polypeptide reads, in one-letter code: Large ribosomal subunit protein bL36c (37 aa).

This sequence belongs to the bacterial ribosomal protein bL36 family.

The protein localises to the plastid. The sequence is that of Large ribosomal subunit protein bL36c (rpl36) from Euglena longa (Euglenophycean alga).